The sequence spans 56 residues: uncharacterized protein (56 aa).

Residues 30–52 (IKIGIICVIITWAIFSINHHHTI) traverse the membrane as a helical segment.

It localises to the membrane. This is an uncharacterized protein from Dictyostelium discoideum (Social amoeba).